The sequence spans 93 residues: Small ribosomal subunit protein bS16 (93 aa).

This sequence belongs to the bacterial ribosomal protein bS16 family.

The chain is Small ribosomal subunit protein bS16 from Roseiflexus castenholzii (strain DSM 13941 / HLO8).